The chain runs to 232 residues: Lipoprotein-releasing system ATP-binding protein LolD 1 (232 aa).

In terms of domain architecture, ABC transporter spans 11 to 231; sequence VYLHDVKRQY…SIQDGLVVEL (221 aa). Residue 47-54 participates in ATP binding; the sequence is APSGAGKS.

It belongs to the ABC transporter superfamily. Lipoprotein translocase (TC 3.A.1.125) family. As to quaternary structure, the complex is composed of two ATP-binding proteins (LolD) and two transmembrane proteins (LolC and LolE).

Its subcellular location is the cell inner membrane. Part of the ABC transporter complex LolCDE involved in the translocation of mature outer membrane-directed lipoproteins, from the inner membrane to the periplasmic chaperone, LolA. Responsible for the formation of the LolA-lipoprotein complex in an ATP-dependent manner. In Rhodopseudomonas palustris (strain BisB18), this protein is Lipoprotein-releasing system ATP-binding protein LolD 1.